The primary structure comprises 406 residues: Acetylornithine aminotransferase (406 aa).

Pyridoxal 5'-phosphate-binding positions include 113-114 and Phe-145; that span reads GT. A N(2)-acetyl-L-ornithine-binding site is contributed by Arg-148. A pyridoxal 5'-phosphate-binding site is contributed by 233-236; that stretch reads DEIQ. Lys-262 carries the post-translational modification N6-(pyridoxal phosphate)lysine. Ser-290 contacts N(2)-acetyl-L-ornithine. A pyridoxal 5'-phosphate-binding site is contributed by Thr-291.

This sequence belongs to the class-III pyridoxal-phosphate-dependent aminotransferase family. ArgD subfamily. In terms of assembly, homodimer. The cofactor is pyridoxal 5'-phosphate.

Its subcellular location is the cytoplasm. It catalyses the reaction N(2)-acetyl-L-ornithine + 2-oxoglutarate = N-acetyl-L-glutamate 5-semialdehyde + L-glutamate. It functions in the pathway amino-acid biosynthesis; L-arginine biosynthesis; N(2)-acetyl-L-ornithine from L-glutamate: step 4/4. The sequence is that of Acetylornithine aminotransferase from Leptospira interrogans serogroup Icterohaemorrhagiae serovar Lai (strain 56601).